The following is a 296-amino-acid chain: Probable endonuclease 4 (296 aa).

Residues histidine 68, histidine 109, glutamate 144, aspartate 178, histidine 181, histidine 213, aspartate 226, histidine 228, and glutamate 258 each coordinate Zn(2+).

It belongs to the AP endonuclease 2 family. Requires Zn(2+) as cofactor.

The catalysed reaction is Endonucleolytic cleavage to 5'-phosphooligonucleotide end-products.. In terms of biological role, endonuclease IV plays a role in DNA repair. It cleaves phosphodiester bonds at apurinic or apyrimidinic (AP) sites, generating a 3'-hydroxyl group and a 5'-terminal sugar phosphate. This chain is Probable endonuclease 4, found in Staphylococcus aureus (strain MRSA252).